Reading from the N-terminus, the 264-residue chain is Small ribosomal subunit protein eS1A (264 aa).

The disordered stretch occupies residues 233–264; that stretch reads GEGGGTGKPAGDETGAKVERADGYEPPVQESV. The span at 242-255 shows a compositional bias: basic and acidic residues; it reads AGDETGAKVERADG.

This sequence belongs to the eukaryotic ribosomal protein eS1 family. Component of the small ribosomal subunit. Mature ribosomes consist of a small (40S) and a large (60S) subunit. The 40S subunit contains about 33 different proteins and 1 molecule of RNA (18S). The 60S subunit contains about 49 different proteins and 3 molecules of RNA (28S, 5.8S and 5S). Part of the small subunit (SSU) processome, composed of more than 70 proteins and the RNA chaperone small nucleolar RNA (snoRNA) U3.

The protein resides in the cytoplasm. It localises to the nucleus. Its subcellular location is the nucleolus. Component of the small ribosomal subunit. The ribosome is a large ribonucleoprotein complex responsible for the synthesis of proteins in the cell. Part of the small subunit (SSU) processome, first precursor of the small eukaryotic ribosomal subunit. During the assembly of the SSU processome in the nucleolus, many ribosome biogenesis factors, an RNA chaperone and ribosomal proteins associate with the nascent pre-rRNA and work in concert to generate RNA folding, modifications, rearrangements and cleavage as well as targeted degradation of pre-ribosomal RNA by the RNA exosome. May play a role during erythropoiesis. The polypeptide is Small ribosomal subunit protein eS1A (rps3a-a) (Xenopus laevis (African clawed frog)).